Consider the following 1137-residue polypeptide: 2'-5'-oligoadenylate synthase 3 (1137 aa).

M1 is subject to N-acetylmethionine. An OAS domain 1 region spans residues 6–341 (TPAGALDKLV…GALVQPWEGP (336 aa)). Interaction with dsRNA regions lie at residues 12 to 56 (DKLV…VIRI) and 185 to 199 (ELRKNFVNIRPVKLK). Residues 342 to 461 (GLPCAGILDL…GSQMGPDLSQ (120 aa)) form a linker region. Over residues 434–453 (QSTASSNTPPGHSSMSTAGS) the composition is skewed to polar residues. The disordered stretch occupies residues 434 to 462 (QSTASSNTPPGHSSMSTAGSQMGPDLSQI). OAS domain stretches follow at residues 462-792 (IPSK…PWDV) and 800-1134 (TPAQ…WPVK). S854 is an ATP binding site. The Mg(2+) site is built by D866, D868, and D938. ATP-binding residues include R997, K1000, and Q1019.

The protein belongs to the 2-5A synthase family. Monomer. Mg(2+) is required as a cofactor.

Its subcellular location is the cytoplasm. The protein resides in the nucleus. It carries out the reaction 3 ATP = 5'-triphosphoadenylyl-(2'-&gt;5')-adenylyl-(2'-&gt;5')-adenosine + 2 diphosphate. Produced as a latent enzyme which is activated by dsRNA generated during the course of viral infection. Strongly activated by long dsRNAs at least 50 nucleotides in length. ssRNA does not activate the enzyme. Functionally, interferon-induced, dsRNA-activated antiviral enzyme which plays a critical role in cellular innate antiviral response. In addition, it may also play a role in other cellular processes such as apoptosis, cell growth, differentiation and gene regulation. Synthesizes preferentially dimers of 2'-5'-oligoadenylates (2-5A) from ATP which then bind to the inactive monomeric form of ribonuclease L (RNase L) leading to its dimerization and subsequent activation. Activation of RNase L leads to degradation of cellular as well as viral RNA, resulting in the inhibition of protein synthesis, thus terminating viral replication. Can mediate the antiviral effect via the classical RNase L-dependent pathway or an alternative antiviral pathway independent of RNase L. The polypeptide is 2'-5'-oligoadenylate synthase 3 (Oas3) (Rattus norvegicus (Rat)).